The primary structure comprises 154 residues: D-aminoacyl-tRNA deacylase (154 aa).

The Gly-cisPro motif, important for rejection of L-amino acids signature appears at 142–143 (GP).

It belongs to the DTD family. In terms of assembly, homodimer.

It localises to the cytoplasm. The enzyme catalyses glycyl-tRNA(Ala) + H2O = tRNA(Ala) + glycine + H(+). It carries out the reaction a D-aminoacyl-tRNA + H2O = a tRNA + a D-alpha-amino acid + H(+). Functionally, an aminoacyl-tRNA editing enzyme that deacylates mischarged D-aminoacyl-tRNAs. Also deacylates mischarged glycyl-tRNA(Ala), protecting cells against glycine mischarging by AlaRS. Acts via tRNA-based rather than protein-based catalysis; rejects L-amino acids rather than detecting D-amino acids in the active site. By recycling D-aminoacyl-tRNA to D-amino acids and free tRNA molecules, this enzyme counteracts the toxicity associated with the formation of D-aminoacyl-tRNA entities in vivo and helps enforce protein L-homochirality. This chain is D-aminoacyl-tRNA deacylase, found in Polaromonas naphthalenivorans (strain CJ2).